Here is a 132-residue protein sequence, read N- to C-terminus: Agouti-signaling protein (132 aa).

The signal sequence occupies residues 1–22 (MDVTRLLLATLLVFLCFFTAYS). The N-linked (GlcNAc...) asparagine glycan is linked to Asn39. Residues 61–87 (QISRKEAEKKRSSKKEASMKKVARPRT) are disordered. A compositionally biased stretch (basic and acidic residues) spans 63–79 (SRKEAEKKRSSKKEASM). Disulfide bonds link Cys93–Cys108, Cys100–Cys114, Cys107–Cys125, Cys111–Cys132, and Cys116–Cys123. The region spanning 93 to 132 (CVATRDSCKPPAPACCDPCASCQCRFFRSACSCRVLSLNC) is the Agouti domain.

Its subcellular location is the secreted. Involved in the regulation of melanogenesis. The binding of ASP to MC1R precludes alpha-MSH initiated signaling and thus blocks production of cAMP, leading to a down-regulation of eumelanogenesis (brown/black pigment) and thus increasing synthesis of pheomelanin (yellow/red pigment). This chain is Agouti-signaling protein (ASIP), found in Macaca maura (Moor macaque).